Consider the following 467-residue polypeptide: Interleukin-6 receptor subunit alpha (467 aa).

Positions 1 to 19 (MLAVGCALLTALLAAPGMA) are cleaved as a signal peptide. One can recognise an Ig-like C2-type domain in the interval 20 to 112 (LAPRGCSKLE…AGSVRLLVDA (93 aa)). The Extracellular segment spans residues 20–365 (LAPRGCSKLE…VQDSASVPLP (346 aa)). Disulfide bonds link Cys-25-Cys-193, Cys-47-Cys-96, Cys-121-Cys-132, and Cys-165-Cys-176. N-linked (GlcNAc...) asparagine glycans are attached at residues Asn-55 and Asn-93. 2 Fibronectin type-III domains span residues 113 to 217 (PPEE…LQPD) and 218 to 316 (PPVN…IPWT). 2 N-linked (GlcNAc...) asparagine glycosylation sites follow: Asn-221 and Asn-245. Positions 303 to 307 (WSEWS) match the WSXWS motif motif. The disordered stretch occupies residues 315-357 (WTESRSSPAETELPLSTQAPTTNEDDEDISSKESANATSLPVQ). Polar residues-rich tracts occupy residues 317–336 (ESRSSPAETELPLSTQAPTT) and 346–357 (KESANATSLPVQ). N-linked (GlcNAc...) asparagine glycosylation occurs at Asn-350. O-linked (GlcNAc) threonine glycosylation occurs at Thr-352. Residues 366 to 386 (TFLVAGGSLAFGTLLCIGIIL) form a helical membrane-spanning segment. At 387 to 467 (RFKKTGQLQA…VSNRDYFFPR (81 aa)) the chain is on the cytoplasmic side. Residues 428–467 (ISPPVSPNSLGDNTSRNSRPEARGPQSPYDVSNRDYFFPR) are disordered.

The protein belongs to the type I cytokine receptor family. Type 3 subfamily. As to quaternary structure, component of a hexamer of two molecules each of IL6, IL6R and IL6ST; first binds to IL6 to associate with the signaling subunit IL6ST. Interacts (via N-terminal ectodomain) with SORL1; this interaction may affect IL6-binding to IL6R, hence decrease IL6 'classic-signaling'. In terms of assembly, also interacts with SORL1; this interaction leads to soluble IL6R internalization. May form a trimeric complex with the soluble SORL1 ectodomain and circulating IL6 receptor; this interaction might stabilize circulating IL6, hence promote IL6 'trans-signaling'. A short soluble form is also released from the membrane by proteolysis. The sIL6R is formed by limited proteolysis of membrane-bound receptors, a process referred to as ectodomain shedding. mIL6R is cleaved by the proteases ADAM10 and ADAM17. Post-translationally, glycosylated. Glycosylation is dispensable for transport, signaling, and cell-surface turnover. Glycosylation at Asn-55 is a protease-regulatory exosite. Glycosylation is required for ADAM17-mediated proteolysis. Expressed in liver.

The protein localises to the cell membrane. Its subcellular location is the secreted. Its activity is regulated as follows. Classic and trans-signaling are both inhibited by tocilizumab, a humanized monoclonal antibody that blocks interleukin IL6R signaling. Its function is as follows. Part of the receptor for interleukin 6. Binds to IL6 with low affinity, but does not transduce a signal. Signal activation necessitate an association with IL6ST. Activation leads to the regulation of the immune response, acute-phase reactions and hematopoiesis. The interaction with membrane-bound IL6R and IL6ST stimulates 'classic signaling', the restricted expression of the IL6R limits classic IL6 signaling to only a few tissues such as the liver and some cells of the immune system. Whereas the binding of IL6 and soluble IL6R to IL6ST stimulates 'trans-signaling'. Alternatively, 'cluster signaling' occurs when membrane-bound IL6:IL6R complexes on transmitter cells activate IL6ST receptors on neighboring receiver cells. Signaling via the membrane-bound IL6R is mostly regenerative and anti-inflammatory. Drives naive CD4(+) T cells to the Th17 lineage, through 'cluster signaling' by dendritic cells. In terms of biological role, soluble form of IL6 receptor (sIL6R) that acts as an agonist of IL6 activity. The IL6:sIL6R complex (hyper-IL6) binds to IL6ST/gp130 on cell surfaces and induces signaling also on cells that do not express membrane-bound IL6R in a process called IL6 'trans-signaling'. sIL6R is causative for the pro-inflammatory properties of IL6 and an important player in the development of chronic inflammatory diseases. In complex with IL6, is required for induction of VEGF production. Plays a protective role during liver injury, being required for maintenance of tissue regeneration. 'Trans-signaling' in central nervous system regulates energy and glucose homeostasis. This chain is Interleukin-6 receptor subunit alpha (IL6R), found in Sus scrofa (Pig).